A 62-amino-acid polypeptide reads, in one-letter code: Sucrase-isomaltase, intestinal (62 aa).

Residues 2–12 (ARKKFSGLEIX) are Cytoplasmic-facing. Ser7 carries the phosphoserine; by PKA modification. Residues 13-32 (LIVLFAIVLSIAIALVVVXA) traverse the membrane as a helical; Signal-anchor for type II membrane protein segment. Residues 33–38 (SKXPAV) lie on the Lumenal side of the membrane. The residue at position 59 (Tyr59) is a Sulfotyrosine.

It belongs to the glycosyl hydrolase 31 family. In terms of assembly, the resulting sucrase and isomaltase subunits stay associated with one another in a complex by non-covalent linkages. Post-translationally, the precursor is proteolytically cleaved when exposed to pancreatic proteases in the intestinal lumen. In terms of processing, sulfated.

The protein localises to the apical cell membrane. It catalyses the reaction Hydrolysis of sucrose and maltose by an alpha-D-glucosidase-type action.. The enzyme catalyses Hydrolysis of (1-&gt;6)-alpha-D-glucosidic linkages in some oligosaccharides produced from starch and glycogen by alpha-amylase, and in isomaltose.. Plays an important role in the final stage of carbohydrate digestion. Isomaltase activity is specific for both alpha-1,4- and alpha-1,6-oligosaccharides. The sequence is that of Sucrase-isomaltase, intestinal (SI) from Sus scrofa (Pig).